A 182-amino-acid chain; its full sequence is uncharacterized protein (182 aa).

The 177-residue stretch at 1–177 folds into the Macro domain; the sequence is MEFSVGGVEV…KFLEVFKKHL (177 aa).

This is an uncharacterized protein from Pyrobaculum aerophilum (strain ATCC 51768 / DSM 7523 / JCM 9630 / CIP 104966 / NBRC 100827 / IM2).